The following is a 270-amino-acid chain: Gap junction beta-3 protein (270 aa).

Topologically, residues 1 to 20 (MDWKKLQDLLSGVNQYSTAF) are cytoplasmic. A helical membrane pass occupies residues 21 to 40 (GRIWLSVVFVFRVLVYVVAA). The Extracellular segment spans residues 41 to 75 (ERVWGDEQKDFDCNTRQPGCTNVCYDNFFPISNIR). Residues 76 to 98 (LWALQLIFVTCPSMLVILHVAYR) form a helical membrane-spanning segment. Residues 99–126 (EERERKHRQKHGEQCAKLYSHPGKKHGG) lie on the Cytoplasmic side of the membrane. Residues 127 to 149 (LWWTYLFSLIFKLIIELVFLYVL) form a helical membrane-spanning segment. The Extracellular portion of the chain corresponds to 150-188 (HTLWHGFTMPRLVQCASIVPCPNTVDCYIARPTEKKVFT). The chain crosses the membrane as a helical span at residues 189–211 (YFMVGASAVCIILTICEICYLIF). Topologically, residues 212–270 (HRIMRGISKGKSTKSISSPKSSSRASTCRCHHKLLESGDPEADPASEKLQASAPSLTPI) are cytoplasmic. The disordered stretch occupies residues 246–270 (LESGDPEADPASEKLQASAPSLTPI).

This sequence belongs to the connexin family. Beta-type (group I) subfamily. A connexon is composed of a hexamer of connexins. Interacts with CNST.

It localises to the cell membrane. It is found in the cell junction. The protein localises to the gap junction. In terms of biological role, one gap junction consists of a cluster of closely packed pairs of transmembrane channels, the connexons, through which materials of low MW diffuse from one cell to a neighboring cell. The sequence is that of Gap junction beta-3 protein (Gjb3) from Mus musculus (Mouse).